The following is a 302-amino-acid chain: Light-independent protochlorophyllide reductase iron-sulfur ATP-binding protein (302 aa).

ATP contacts are provided by residues G46–T51 and K75. A Mg(2+)-binding site is contributed by S50. Positions 131 and 165 each coordinate [4Fe-4S] cluster. N216–R217 contacts ATP.

This sequence belongs to the NifH/BchL/ChlL family. In terms of assembly, homodimer. Protochlorophyllide reductase is composed of three subunits; BchL, BchN and BchB. [4Fe-4S] cluster is required as a cofactor.

The catalysed reaction is chlorophyllide a + oxidized 2[4Fe-4S]-[ferredoxin] + 2 ADP + 2 phosphate = protochlorophyllide a + reduced 2[4Fe-4S]-[ferredoxin] + 2 ATP + 2 H2O. The protein operates within porphyrin-containing compound metabolism; bacteriochlorophyll biosynthesis (light-independent). In terms of biological role, component of the dark-operative protochlorophyllide reductase (DPOR) that uses Mg-ATP and reduced ferredoxin to reduce ring D of protochlorophyllide (Pchlide) to form chlorophyllide a (Chlide). This reaction is light-independent. The L component serves as a unique electron donor to the NB-component of the complex, and binds Mg-ATP. This Methylocella silvestris (strain DSM 15510 / CIP 108128 / LMG 27833 / NCIMB 13906 / BL2) protein is Light-independent protochlorophyllide reductase iron-sulfur ATP-binding protein.